Here is a 108-residue protein sequence, read N- to C-terminus: UPF0060 membrane protein sll0793 (108 aa).

4 helical membrane-spanning segments follow: residues 7–27 (LYFVMAGLCEIGGGYLVWLWI), 32–52 (SVWLALVRAILLTVYGFVATL), 64–84 (YGGIFIILSIIWGWQVDNVVV), and 86–106 (RLDWLGAAIALVGVLVMMYAN).

Belongs to the UPF0060 family.

The protein resides in the cell inner membrane. The polypeptide is UPF0060 membrane protein sll0793 (Synechocystis sp. (strain ATCC 27184 / PCC 6803 / Kazusa)).